A 344-amino-acid polypeptide reads, in one-letter code: MVTERQNEILNLIIDIFTKTHEPVGSKALQDSINSSSATIRNDMAALEKQGLLEKAHTSSGRKPSVAGFQYFVKHSLSFDRLAENELYEVIKAFDHEFFNLEDILQQAADLLTKLSGCTVVALDVEPSRQRLTAFDIVVLSQHTALAVFTLDESNTITSQFMIPRNFLKEDLDRLKGLVRERFLGQTVLDIHYKIRTEIPQIIQRYFTTTDNVIQLFEHIFGDIFKENVILSGKVQLLEFSDLTAYQFFDDPQKVAFEIRDSLAEDQMQSVRVADSRESCLADLTLISSKFLIPYRGFGVLAVVGPVNLDYQRLVSQMNVVNRVLTMKLTDFYRYLSSNHYEVH.

Belongs to the HrcA family.

Its function is as follows. Negative regulator of class I heat shock genes (grpE-dnaK-dnaJ and groELS operons). Prevents heat-shock induction of these operons. This chain is Heat-inducible transcription repressor HrcA, found in Streptococcus sanguinis (strain SK36).